We begin with the raw amino-acid sequence, 188 residues long: UPF0301 protein XAC2918 (188 aa).

The protein belongs to the UPF0301 (AlgH) family.

This Xanthomonas axonopodis pv. citri (strain 306) protein is UPF0301 protein XAC2918.